We begin with the raw amino-acid sequence, 214 residues long: Lazarillo protein (214 aa).

The N-terminal stretch at 1–21 is a signal peptide; it reads MIRRGLLSVTAALVLLSVSCS. 7 N-linked (GlcNAc...) asparagine glycosylation sites follow: N38, N74, N84, N90, N130, N158, and N161. A192 is lipidated: GPI-anchor amidated alanine. The propeptide at 193–214 is removed in mature form; that stretch reads GAEHVVGAMLSVAIASLFALLH.

The protein belongs to the calycin superfamily. Lipocalin family. In terms of processing, N-glycosylated. Post-translationally, contains disulfide bonds. Expressed by a subset of neuroblasts, ganglion mother cells and neurons of the CNS; by all sensory neurons of the PNS.

The protein resides in the cell membrane. Putative role in axonal outgrowth and guidance, required for the navigation of identified commissural neurons. Could be a receptor the midline morphogen. This chain is Lazarillo protein, found in Schistocerca americana (American grasshopper).